The following is a 143-amino-acid chain: Protein STIG1 (143 aa).

Positions 1–23 (MDFIILLIAILALSSTPITIISG) are cleaved as a signal peptide. The tract at residues 76 to 87 (RTCCFNYFCVDL) is sufficient for PI(4)P binding. Positions 80–83 (FNYF) are sufficient for binding to the extracellular domain of PRK2. Residues 88–115 (FTNRFNCGSCGLVCIVGTRCCGGICVDI) are sufficient for PI(3)P binding.

This sequence belongs to the STIG1 family. In terms of assembly, interacts with PRK1 and PRK2 (via extracellular domain). As to expression, expressed in the stigma and the upper section of the style.

The protein localises to the secreted. It localises to the extracellular space. Its subcellular location is the apoplast. Functionally, promotes pollen tube growth. A C-terminal peptide is cleaved from the propeptide in the stigmatic exudate and represent the major form of STIG1. Binds phosphoinositol lipids. The binding of external phosphatidylinositol 3-phosphate (PI(3)P) and PRK2 by STIG1 induces a rapid intracellular reactive oxygen species elevation. This chain is Protein STIG1, found in Solanum lycopersicum (Tomato).